The sequence spans 152 residues: Atypical leghemoglobin 2-1 (152 aa).

Residues 3–152 (TFSEEQEALV…LAGVIKKGMS (150 aa)) form the Globin domain. Tyr31 is subject to Nitrated tyrosine. Position 46 (Ser46) interacts with heme b. Ser46 carries the post-translational modification Phosphoserine. An O2-binding site is contributed by His64. Positions 67, 99, and 102 each coordinate heme b. At Tyr140 the chain carries Nitrated tyrosine.

It belongs to the plant globin family. Monomer. In terms of processing, nitrated in effective nodules and particularly in hypoxic conditions; this mechanism may play a protective role in the symbiosis by buffering toxic peroxynitrite NO(2)(-). Nitration level decrease during nodule senescence. Phosphorylation at Ser-46 disrupts the molecular environment of its porphyrin ring oxygen binding pocket, thus leading to a reduced oxygen consumption and to the delivery of oxygen O(2) to symbiosomes. As to expression, mainly expressed in leaves and, at low levels, in roots of non-nodulated plants. However, accumulates also in nodules and roots, and, to a lower extent, in leaves, stems, flowers and fruits, in nodulated plants.

In terms of biological role, atypical leghemoglobin that reversibly binds oxygen O(2) through a pentacoordinated heme iron. In nodules, facilitates the diffusion of oxygen to the bacteroids while preventing the bacterial nitrogenase from being inactivated by buffering dioxygen, nitric oxide and carbon monoxide. This role is essential for symbiotic nitrogen fixation (SNF). Seems not restricted to symbiotic nitrogen fixation and root nodules formation, but also contributes to general plant development and metabolism. This is Atypical leghemoglobin 2-1 from Lotus japonicus (Lotus corniculatus var. japonicus).